Consider the following 169-residue polypeptide: Large ribosomal subunit protein bL19m (169 aa).

The N-terminal 16 residues, 1–16, are a transit peptide targeting the mitochondrion; the sequence is MWSRNVRLLGSWTRSY.

The protein belongs to the bacterial ribosomal protein bL19 family. As to quaternary structure, component of the mitochondrial large ribosomal subunit (mt-LSU). Mature yeast 74S mitochondrial ribosomes consist of a small (37S) and a large (54S) subunit. The 37S small subunit contains a 15S ribosomal RNA (15S mt-rRNA) and 34 different proteins. The 54S large subunit contains a 21S rRNA (21S mt-rRNA) and 46 different proteins.

The protein localises to the mitochondrion. Its function is as follows. Component of the mitochondrial ribosome (mitoribosome), a dedicated translation machinery responsible for the synthesis of mitochondrial genome-encoded proteins, including at least some of the essential transmembrane subunits of the mitochondrial respiratory chain. The mitoribosomes are attached to the mitochondrial inner membrane and translation products are cotranslationally integrated into the membrane. bL19m is essential for respiration. The sequence is that of Large ribosomal subunit protein bL19m (IMG1) from Saccharomyces cerevisiae (strain ATCC 204508 / S288c) (Baker's yeast).